The chain runs to 119 residues: Protein TusC (119 aa).

It belongs to the DsrF/TusC family. In terms of assembly, heterohexamer, formed by a dimer of trimers. The hexameric TusBCD complex contains 2 copies each of TusB, TusC and TusD. The TusBCD complex interacts with TusE.

It is found in the cytoplasm. In terms of biological role, part of a sulfur-relay system required for 2-thiolation of 5-methylaminomethyl-2-thiouridine (mnm(5)s(2)U) at tRNA wobble positions. The protein is Protein TusC of Klebsiella pneumoniae (strain 342).